The sequence spans 245 residues: Geranylgeranylglyceryl phosphate synthase (245 aa).

2 residues coordinate Mg(2+): aspartate 22 and serine 51. Sn-glycerol 1-phosphate is bound by residues 169 to 175 (YLEAGSG), 200 to 201 (GG), and 222 to 223 (GT).

The protein belongs to the GGGP/HepGP synthase family. Group II subfamily. In terms of assembly, homotetramer. Homohexamer. It depends on Mg(2+) as a cofactor.

Its subcellular location is the cytoplasm. It carries out the reaction sn-glycerol 1-phosphate + (2E,6E,10E)-geranylgeranyl diphosphate = sn-3-O-(geranylgeranyl)glycerol 1-phosphate + diphosphate. Its pathway is membrane lipid metabolism; glycerophospholipid metabolism. Its function is as follows. Prenyltransferase that catalyzes the transfer of the geranylgeranyl moiety of geranylgeranyl diphosphate (GGPP) to the C3 hydroxyl of sn-glycerol-1-phosphate (G1P). This reaction is the first ether-bond-formation step in the biosynthesis of archaeal membrane lipids. In Methanothermobacter thermautotrophicus (strain ATCC 29096 / DSM 1053 / JCM 10044 / NBRC 100330 / Delta H) (Methanobacterium thermoautotrophicum), this protein is Geranylgeranylglyceryl phosphate synthase.